A 398-amino-acid polypeptide reads, in one-letter code: 1-deoxy-D-xylulose 5-phosphate reductoisomerase (398 aa).

Residues threonine 10, glycine 11, serine 12, isoleucine 13, glycine 36, lysine 37, asparagine 38, and asparagine 124 each contribute to the NADPH site. Lysine 125 is a 1-deoxy-D-xylulose 5-phosphate binding site. Residue glutamate 126 participates in NADPH binding. Aspartate 150 is a Mn(2+) binding site. Residues serine 151, glutamate 152, serine 186, and histidine 209 each contribute to the 1-deoxy-D-xylulose 5-phosphate site. Glutamate 152 provides a ligand contact to Mn(2+). Glycine 215 contributes to the NADPH binding site. Positions 222, 227, 228, and 231 each coordinate 1-deoxy-D-xylulose 5-phosphate. Glutamate 231 is a Mn(2+) binding site.

This sequence belongs to the DXR family. Homodimer. Requires Mg(2+) as cofactor. It depends on Mn(2+) as a cofactor.

It catalyses the reaction 2-C-methyl-D-erythritol 4-phosphate + NADP(+) = 1-deoxy-D-xylulose 5-phosphate + NADPH + H(+). It functions in the pathway isoprenoid biosynthesis; isopentenyl diphosphate biosynthesis via DXP pathway; isopentenyl diphosphate from 1-deoxy-D-xylulose 5-phosphate: step 1/6. Functionally, catalyzes the NADPH-dependent rearrangement and reduction of 1-deoxy-D-xylulose-5-phosphate (DXP) to 2-C-methyl-D-erythritol 4-phosphate (MEP). The chain is 1-deoxy-D-xylulose 5-phosphate reductoisomerase from Salmonella choleraesuis (strain SC-B67).